The chain runs to 189 residues: ATP synthase subunit b (189 aa).

A helical membrane pass occupies residues leucine 35 to tyrosine 54.

It belongs to the ATPase B chain family. In terms of assembly, F-type ATPases have 2 components, F(1) - the catalytic core - and F(0) - the membrane proton channel. F(1) has five subunits: alpha(3), beta(3), gamma(1), delta(1), epsilon(1). F(0) has three main subunits: a(1), b(2) and c(10-14). The alpha and beta chains form an alternating ring which encloses part of the gamma chain. F(1) is attached to F(0) by a central stalk formed by the gamma and epsilon chains, while a peripheral stalk is formed by the delta and b chains.

It localises to the cell membrane. In terms of biological role, f(1)F(0) ATP synthase produces ATP from ADP in the presence of a proton or sodium gradient. F-type ATPases consist of two structural domains, F(1) containing the extramembraneous catalytic core and F(0) containing the membrane proton channel, linked together by a central stalk and a peripheral stalk. During catalysis, ATP synthesis in the catalytic domain of F(1) is coupled via a rotary mechanism of the central stalk subunits to proton translocation. Functionally, component of the F(0) channel, it forms part of the peripheral stalk, linking F(1) to F(0). The polypeptide is ATP synthase subunit b (Desulforamulus reducens (strain ATCC BAA-1160 / DSM 100696 / MI-1) (Desulfotomaculum reducens)).